The primary structure comprises 61 residues: Delta-actitoxin-Avd2c (61 aa).

Positions 1–20 (MMNRLLVFLMLGAFMLVVSA) are cleaved as a signal peptide. A propeptide spanning residues 21–31 (NDAYGGDESLG) is cleaved from the precursor. Intrachain disulfides connect Cys-36/Cys-51, Cys-37/Cys-45, and Cys-39/Cys-56.

It belongs to the sea anemone short toxin (type III) family.

The protein resides in the secreted. It is found in the nematocyst. In terms of biological role, sodium channel inhibitor. 5 uM completely inhibits voltage-gated sodium channel (Nav) inactivation. In Anemonia viridis (Snakelocks anemone), this protein is Delta-actitoxin-Avd2c.